The following is a 292-amino-acid chain: MGRQKELVNRCGEMLHIRYRLLRQALAECLGTLILVMFGCGSVAQVVLSRGTHGGFLTINLAFGFAVTLGILIAGQVSGAHLNPAVTFAMCFLAREPWIKLPVYTLAQTLGAFLGAGIIFGLYYDAIWAFANNQLIVSGPNGTAGIFATYPSGHLDMVNGFFDQFIGTASLIVCVLAIVDPYNNPVPRGLEAFTVGLVVLVIGTSMGFNSGYAVNPARDFGPRLFTAIAGWGSEVFTTGRHWWWVPIVSPLLGSIAGVFVYQLMIGCHLEPPPPSTDEENVKLSHVKHKEQM.

Over 1–24 the chain is Cytoplasmic; the sequence is MGRQKELVNRCGEMLHIRYRLLRQ. A helical transmembrane segment spans residues 25–42; the sequence is ALAECLGTLILVMFGCGS. The Extracellular portion of the chain corresponds to 43 to 56; sequence VAQVVLSRGTHGGF. The chain crosses the membrane as a helical span at residues 57 to 74; that stretch reads LTINLAFGFAVTLGILIA. Residues 75–78 are Cytoplasmic-facing; the sequence is GQVS. An intramembrane region (discontinuously helical) is located at residues 79 to 92; that stretch reads GAHLNPAVTFAMCF. The NPA 1 signature appears at 83-85; it reads NPA. Over 93–100 the chain is Cytoplasmic; that stretch reads LAREPWIK. The chain crosses the membrane as a helical span at residues 101 to 121; that stretch reads LPVYTLAQTLGAFLGAGIIFG. The Extracellular segment spans residues 122 to 159; it reads LYYDAIWAFANNQLIVSGPNGTAGIFATYPSGHLDMVN. A glycan (N-linked (GlcNAc...) asparagine) is linked at N141. A helical membrane pass occupies residues 160-177; that stretch reads GFFDQFIGTASLIVCVLA. Residues 178–189 lie on the Cytoplasmic side of the membrane; that stretch reads IVDPYNNPVPRG. Residues 190–206 form a helical membrane-spanning segment; sequence LEAFTVGLVVLVIGTSM. Topologically, residues 207-210 are extracellular; that stretch reads GFNS. The segment at residues 211–224 is an intramembrane region (discontinuously helical); that stretch reads GYAVNPARDFGPRL. The NPA 2 motif lies at 215–217; that stretch reads NPA. Residues 225 to 242 are Extracellular-facing; it reads FTAIAGWGSEVFTTGRHW. The chain crosses the membrane as a helical span at residues 243-264; the sequence is WWVPIVSPLLGSIAGVFVYQLM. Residues 265–292 lie on the Cytoplasmic side of the membrane; the sequence is IGCHLEPPPPSTDEENVKLSHVKHKEQM.

It belongs to the MIP/aquaporin (TC 1.A.8) family. As to quaternary structure, homotetramer; each monomer provides an independent glycerol/water pore. Could also exist in other oligomeric states.

The protein resides in the cell membrane. It localises to the basolateral cell membrane. It catalyses the reaction glycerol(in) = glycerol(out). It carries out the reaction H2O(in) = H2O(out). The enzyme catalyses urea(in) = urea(out). The catalysed reaction is H2O2(out) = H2O2(in). Its function is as follows. Aquaglyceroporins form homotetrameric transmembrane channels, with each monomer independently mediating glycerol and water transport across the plasma membrane along their osmotic gradient. Could also be permeable to urea. Also participates in cell permeability to H2O2 and H2O2-mediated signaling. In skin, transports glycerol to the epidermis and stratum corneum, where it maintains hydration, elasticity, and supports lipid biosynthesis for barrier repair. In kidney, contributes to the reabsorption of water, helping the body maintain proper fluid balance. The chain is Aquaporin-3 from Bos taurus (Bovine).